Consider the following 163-residue polypeptide: Phosphopantetheine adenylyltransferase (163 aa).

Threonine 11 is a substrate binding site. ATP-binding positions include 11–12 (TF) and histidine 19. Substrate-binding residues include lysine 43, leucine 75, and arginine 89. Residues 90–92 (GLR), glutamate 100, and 125–131 (YSFISST) contribute to the ATP site.

This sequence belongs to the bacterial CoaD family. In terms of assembly, homohexamer. It depends on Mg(2+) as a cofactor.

The protein resides in the cytoplasm. The enzyme catalyses (R)-4'-phosphopantetheine + ATP + H(+) = 3'-dephospho-CoA + diphosphate. The protein operates within cofactor biosynthesis; coenzyme A biosynthesis; CoA from (R)-pantothenate: step 4/5. Its function is as follows. Reversibly transfers an adenylyl group from ATP to 4'-phosphopantetheine, yielding dephospho-CoA (dPCoA) and pyrophosphate. The chain is Phosphopantetheine adenylyltransferase from Acinetobacter baylyi (strain ATCC 33305 / BD413 / ADP1).